The primary structure comprises 269 residues: ATLREIETRLKSIKNIEKITNTMKVVASTRMGRAQRAMASSRAFREGDSDFFATAETSTPETAEKTLIIAVSSDKGLCGSIHSQIAKATRAKLQETPNADVVTIGDKIKAQMLRTHSSNVVLSFNGVGKEAPTFWEASLIADEIRKLGDYDKIEVMYNKFVSGVAFEPSVFPSFSPISIEESPKLSEFELEEDQAIPTSLSQISLTNAILNAMAEGYASEISARRNAMDNASKNAGEMINKYSILYNRTRQAVITNELVDIITGASSLD.

As to quaternary structure, F-type ATP synthases have 2 components, the catalytic core F(1) and the membrane-embedded component F(0), linked together by a central stalk and a peripheral stalk. The central stalk, also called rotor shaft, is often seen as part of F(1). The peripheral stalk is seen as part of F(0). F(0) contains the membrane channel next to the rotor. F-type ATP synthases form dimers but each monomer functions independently in ATP generation. The dimer consists of 18 different polypeptides: ATP1 (subunit alpha, part of F(1), 3 molecules per monomer), ATP2 (subunit beta, part of F(1), 3 molecules per monomer), ATP3 (subunit gamma, part of the central stalk), ATP4 (subunit b, part of the peripheral stalk), ATP5/OSCP (subunit 5/OSCP, part of the peripheral stalk), ATP6 (subunit a, part of the peripheral stalk), ATP7 (subunit d, part of the peripheral stalk), ATP8 (subunit 8, part of the peripheral stalk), OLI1 (subunit c, part of the rotor, 10 molecules per monomer), ATP14 (subunit h, part of the peripheral stalk), ATP15 (subunit epsilon, part of the central stalk), ATP16 (subunit delta, part of the central stalk), ATP17 (subunit f, part of the peripheral stalk), ATP18 (subunit i/j, part of the peripheral stalk). Dimer-specific subunits are ATP19 (subunit k, at interface between monomers), ATP20 (subunit g, at interface between monomers), TIM11 (subunit e, at interface between monomers). Also contains subunit L.

The protein resides in the mitochondrion inner membrane. Its function is as follows. Mitochondrial membrane ATP synthase (F(1)F(0) ATP synthase or Complex V) produces ATP from ADP in the presence of a proton gradient across the membrane which is generated by electron transport complexes of the respiratory chain. F-type ATP synthases consist of two structural domains, F(1) - containing the extramembraneous catalytic core, and F(0) - containing the membrane proton channel, linked together by a central stalk and a peripheral stalk. During catalysis, ATP synthesis in the catalytic domain of F(1) is coupled via a rotary mechanism of the central stalk subunits to proton translocation. Part of the complex F(1) domain and the central stalk which is part of the complex rotary element. The gamma/ATP3 subunit protrudes into the catalytic domain formed of alpha/ATP1(3)beta/ATP2(3). Rotation of the central stalk against the surrounding alpha/ATP1(3)beta/ATP2(3) subunits leads to hydrolysis of ATP in three separate catalytic sites on the beta/ATP2 subunits. This is ATP synthase subunit gamma, mitochondrial from Pichia angusta (Yeast).